Consider the following 318-residue polypeptide: Pyrroline-5-carboxylate reductase ucsG (318 aa).

It belongs to the pyrroline-5-carboxylate reductase family.

It functions in the pathway mycotoxin biosynthesis. In terms of biological role, pyrroline-5-carboxylate reductase; part of the gene cluster that mediates the biosynthesis of UCS1025A, a member of the pyrrolizidinone family that acts as a strong telomerase inhibitor and displays potent antibacterial and antitumor properties. These compounds share a hemiaminal-containing pyrrolizidinone core fused with a gamma-lactone, giving a furopyrrolizidine that is connected to a decalin fragment. The polyketide synthase module (PKS) of the PKS-NRPS ucsA is responsible for the synthesis of the polyketide backbone via the condensation of an acetyl-CoA starter unit with 6 malonyl-CoA units. The downstream nonribosomal peptide synthetase (NRPS) module then amidates the carboxyl end of the polyketide with a 2S,3S-methylproline derived from L-isoleucine by the 2-oxoglutarate-dependent dioxygenase ucsF which converts L-isoleucine to (4S,5S)-4-methylpyrroline-5-carboxylate that is further converted to 2S,3S-methylproline by the pyrroline-5-carboxylate reductase ucsG. Reductive release of the completed aminoacyl polyketide from the assembly line can form the 3-pyrrolin-2-one structure via an intramolecular Knoevenagel reaction. Because ucsA lacks a designated enoylreductase (ER) domain, the required activity is provided the enoyl reductase ucsL. This keto acyclic precursor is the substrate of the Diels-Alderase ucsH, that catalyzes the Diels-Alder cycloaddition. Oxidation of the 3S-methyl group to a carboxylate by the cytochrome P450 monooxygenase ucsK allows an oxa-Michael cyclization that might involve the reductase/dehydrogenase ucsI and which furnishes the furopyrrolizidine. The oxidase ucsJ likely plays a critical role in stereoselective reduction of the C5-C6 double bond to afford the required R-configured carboxylate group. Further enolization and oxidation at C5 by an unidentified enzyme affords the last intermediate that can undergo oxa-Michael cyclization to yield UCS1025A. The protein is Pyrroline-5-carboxylate reductase ucsG of Acremonium sp.